Here is a 337-residue protein sequence, read N- to C-terminus: Putative high mobility group B protein 11 (337 aa).

Residues 34–125 (VRNPELFWEM…MLFEFEHLYY (92 aa)) enclose the ARID domain. Disordered regions lie at residues 197-221 (TKRG…QRTG) and 298-337 (AGTS…EVSQ). The segment at residues 215–282 (PKRQRTGYNF…RYKMEILQYR (68 aa)) is a DNA-binding region (HMG box). Residues 319–329 (TDACTSASSAA) show a composition bias toward low complexity.

It belongs to the HMGB family.

Its subcellular location is the nucleus. Its function is as follows. Binds preferentially DNA with A/T-rich content. The sequence is that of Putative high mobility group B protein 11 (HMGB11) from Arabidopsis thaliana (Mouse-ear cress).